The chain runs to 240 residues: NAD(P)H-quinone oxidoreductase subunit K (240 aa).

[4Fe-4S] cluster contacts are provided by cysteine 55, cysteine 56, cysteine 120, and cysteine 151.

The protein belongs to the complex I 20 kDa subunit family. As to quaternary structure, NDH-1 can be composed of about 15 different subunits; different subcomplexes with different compositions have been identified which probably have different functions. Requires [4Fe-4S] cluster as cofactor.

The protein resides in the cellular thylakoid membrane. The catalysed reaction is a plastoquinone + NADH + (n+1) H(+)(in) = a plastoquinol + NAD(+) + n H(+)(out). It carries out the reaction a plastoquinone + NADPH + (n+1) H(+)(in) = a plastoquinol + NADP(+) + n H(+)(out). Its function is as follows. NDH-1 shuttles electrons from an unknown electron donor, via FMN and iron-sulfur (Fe-S) centers, to quinones in the respiratory and/or the photosynthetic chain. The immediate electron acceptor for the enzyme in this species is believed to be plastoquinone. Couples the redox reaction to proton translocation, and thus conserves the redox energy in a proton gradient. Cyanobacterial NDH-1 also plays a role in inorganic carbon-concentration. The polypeptide is NAD(P)H-quinone oxidoreductase subunit K (Trichodesmium erythraeum (strain IMS101)).